Reading from the N-terminus, the 99-residue chain is Cyclin-dependent protein kinase inhibitor SMR7 (99 aa).

The segment at 49-70 (ICITPTARGAKTPECPAAPRKR) is disordered.

Expressed in root meristems after induction.

Functionally, probable cyclin-dependent protein kinase (CDK) inhibitor that functions as a repressor of mitosis in the endoreduplication cell cycle. Acts as a potent cell cycle inhibitor, regulating a hydroxyurea-dependent checkpoint in leaves. In Arabidopsis thaliana (Mouse-ear cress), this protein is Cyclin-dependent protein kinase inhibitor SMR7.